A 349-amino-acid chain; its full sequence is UDP-N-acetylenolpyruvoylglucosamine reductase (349 aa).

Positions 25–197 constitute an FAD-binding PCMH-type domain; that stretch reads GIAATARYAA…VAVTFRLPKR (173 aa). The active site involves Arg-173. Ser-249 acts as the Proton donor in catalysis. Glu-345 is a catalytic residue.

Belongs to the MurB family. FAD is required as a cofactor.

It localises to the cytoplasm. It carries out the reaction UDP-N-acetyl-alpha-D-muramate + NADP(+) = UDP-N-acetyl-3-O-(1-carboxyvinyl)-alpha-D-glucosamine + NADPH + H(+). The protein operates within cell wall biogenesis; peptidoglycan biosynthesis. Functionally, cell wall formation. This is UDP-N-acetylenolpyruvoylglucosamine reductase from Burkholderia vietnamiensis (strain G4 / LMG 22486) (Burkholderia cepacia (strain R1808)).